A 67-amino-acid chain; its full sequence is Ferredoxin FdxE (67 aa).

Positions 10, 11, 15, 16, and 54 each coordinate [3Fe-4S] cluster.

As to quaternary structure, interacts with the cytochrome P450 143 with high affinity (Kd=84 nM). Requires [3Fe-4S] cluster as cofactor.

Ferredoxin that is the redox partner of cytochrome CYP143, a cytochrome P450 encoded by an adjacent gene. This Mycobacterium tuberculosis (strain ATCC 25618 / H37Rv) protein is Ferredoxin FdxE.